A 123-amino-acid chain; its full sequence is Small ribosomal subunit protein uS12 (123 aa).

A 3-methylthioaspartic acid modification is found at Asp89.

Belongs to the universal ribosomal protein uS12 family. In terms of assembly, part of the 30S ribosomal subunit. Contacts proteins S8 and S17. May interact with IF1 in the 30S initiation complex.

In terms of biological role, with S4 and S5 plays an important role in translational accuracy. Interacts with and stabilizes bases of the 16S rRNA that are involved in tRNA selection in the A site and with the mRNA backbone. Located at the interface of the 30S and 50S subunits, it traverses the body of the 30S subunit contacting proteins on the other side and probably holding the rRNA structure together. The combined cluster of proteins S8, S12 and S17 appears to hold together the shoulder and platform of the 30S subunit. The chain is Small ribosomal subunit protein uS12 from Rhodopseudomonas palustris (strain HaA2).